A 374-amino-acid chain; its full sequence is Cyclin-D (374 aa).

The protein belongs to the cyclin family. Cyclin D subfamily.

This is Cyclin-D (CycD) from Ostreococcus tauri.